Here is a 103-residue protein sequence, read N- to C-terminus: Large ribosomal subunit protein uL24 (103 aa).

The protein belongs to the universal ribosomal protein uL24 family. As to quaternary structure, part of the 50S ribosomal subunit.

Functionally, one of two assembly initiator proteins, it binds directly to the 5'-end of the 23S rRNA, where it nucleates assembly of the 50S subunit. One of the proteins that surrounds the polypeptide exit tunnel on the outside of the subunit. This chain is Large ribosomal subunit protein uL24, found in Brucella ovis (strain ATCC 25840 / 63/290 / NCTC 10512).